Consider the following 875-residue polypeptide: Alanine--tRNA ligase (875 aa).

Residues H561, H565, C663, and H667 each contribute to the Zn(2+) site.

Belongs to the class-II aminoacyl-tRNA synthetase family. Requires Zn(2+) as cofactor.

It localises to the cytoplasm. The catalysed reaction is tRNA(Ala) + L-alanine + ATP = L-alanyl-tRNA(Ala) + AMP + diphosphate. In terms of biological role, catalyzes the attachment of alanine to tRNA(Ala) in a two-step reaction: alanine is first activated by ATP to form Ala-AMP and then transferred to the acceptor end of tRNA(Ala). Also edits incorrectly charged Ser-tRNA(Ala) and Gly-tRNA(Ala) via its editing domain. This Chlamydia trachomatis serovar L2 (strain ATCC VR-902B / DSM 19102 / 434/Bu) protein is Alanine--tRNA ligase.